Here is a 32-residue protein sequence, read N- to C-terminus: IPACMVEDGGCWDPLGEAFNSATQRAETLRNL.

C4 and C11 are oxidised to a cystine.

Belongs to the somatotropin/prolactin family. In terms of processing, glycosylated. As to expression, placental basal zone cells.

It is found in the secreted. This Rattus norvegicus (Rat) protein is Growth hormone-related protein 4.